The following is a 161-amino-acid chain: 2-C-methyl-D-erythritol 2,4-cyclodiphosphate synthase (161 aa).

Residues aspartate 10 and histidine 12 each coordinate a divalent metal cation. 4-CDP-2-C-methyl-D-erythritol 2-phosphate contacts are provided by residues 10–12 (DVH) and 36–37 (HS). An a divalent metal cation-binding site is contributed by histidine 44. 4-CDP-2-C-methyl-D-erythritol 2-phosphate is bound by residues 58–60 (DIG), 63–67 (FSDTD), and arginine 144.

Belongs to the IspF family. Homotrimer. It depends on a divalent metal cation as a cofactor.

The enzyme catalyses 4-CDP-2-C-methyl-D-erythritol 2-phosphate = 2-C-methyl-D-erythritol 2,4-cyclic diphosphate + CMP. The protein operates within isoprenoid biosynthesis; isopentenyl diphosphate biosynthesis via DXP pathway; isopentenyl diphosphate from 1-deoxy-D-xylulose 5-phosphate: step 4/6. Its function is as follows. Involved in the biosynthesis of isopentenyl diphosphate (IPP) and dimethylallyl diphosphate (DMAPP), two major building blocks of isoprenoid compounds. Catalyzes the conversion of 4-diphosphocytidyl-2-C-methyl-D-erythritol 2-phosphate (CDP-ME2P) to 2-C-methyl-D-erythritol 2,4-cyclodiphosphate (ME-CPP) with a corresponding release of cytidine 5-monophosphate (CMP). The polypeptide is 2-C-methyl-D-erythritol 2,4-cyclodiphosphate synthase (Burkholderia lata (strain ATCC 17760 / DSM 23089 / LMG 22485 / NCIMB 9086 / R18194 / 383)).